A 446-amino-acid chain; its full sequence is Chromosomal replication initiator protein DnaA (446 aa).

Positions 1-92 are domain I, interacts with DnaA modulators; that stretch reads MENISDLWNS…SQAEEEIDLP (92 aa). The tract at residues 87-107 is disordered; that stretch reads EEIDLPPSKPNSAQDDSNHLP. The segment at 93–109 is domain II; that stretch reads PSKPNSAQDDSNHLPQS. Polar residues predominate over residues 96-107; the sequence is PNSAQDDSNHLP. The domain III, AAA+ region stretch occupies residues 110–326; that stretch reads MLNPKYTFDT…GALIRVVAYS (217 aa). Gly154, Gly156, Lys157, and Thr158 together coordinate ATP. Positions 327 to 446 are domain IV, binds dsDNA; that stretch reads SLINKDINAD…QVEEINDILK (120 aa).

Belongs to the DnaA family. In terms of assembly, oligomerizes as a right-handed, spiral filament on DNA at oriC.

The protein localises to the cytoplasm. Its function is as follows. Plays an essential role in the initiation and regulation of chromosomal replication. ATP-DnaA binds to the origin of replication (oriC) to initiate formation of the DNA replication initiation complex once per cell cycle. Binds the DnaA box (a 9 base pair repeat at the origin) and separates the double-stranded (ds)DNA. Forms a right-handed helical filament on oriC DNA; dsDNA binds to the exterior of the filament while single-stranded (ss)DNA is stabiized in the filament's interior. The ATP-DnaA-oriC complex binds and stabilizes one strand of the AT-rich DNA unwinding element (DUE), permitting loading of DNA polymerase. After initiation quickly degrades to an ADP-DnaA complex that is not apt for DNA replication. Binds acidic phospholipids. This Bacillus cereus (strain ATCC 10987 / NRS 248) protein is Chromosomal replication initiator protein DnaA.